Consider the following 349-residue polypeptide: Ribosomal RNA large subunit methyltransferase M (349 aa).

S-adenosyl-L-methionine is bound by residues 216–219, aspartate 235, aspartate 255, and aspartate 271; that span reads APGG. Lysine 300 (proton acceptor) is an active-site residue.

This sequence belongs to the class I-like SAM-binding methyltransferase superfamily. RNA methyltransferase RlmE family. RlmM subfamily. Monomer.

It is found in the cytoplasm. It carries out the reaction cytidine(2498) in 23S rRNA + S-adenosyl-L-methionine = 2'-O-methylcytidine(2498) in 23S rRNA + S-adenosyl-L-homocysteine + H(+). In terms of biological role, catalyzes the 2'-O-methylation at nucleotide C2498 in 23S rRNA. This Saccharophagus degradans (strain 2-40 / ATCC 43961 / DSM 17024) protein is Ribosomal RNA large subunit methyltransferase M.